The following is a 78-amino-acid chain: Leukemia-associated protein 1 (78 aa).

Its function is as follows. May act as a tumor suppressor. The polypeptide is Leukemia-associated protein 1 (DLEU1) (Homo sapiens (Human)).